The following is a 1488-amino-acid chain: Chromosome partition protein MukB (1488 aa).

34-41 (GGNGAGKS) is an ATP binding site. Coiled-coil stretches lie at residues 326–418 (LEAD…QYNQ), 444–472 (LDTF…QTAH), and 509–602 (RHLA…QRAP). Positions 666-783 (PGGAEDQRLN…SLPIFGRAAR (118 aa)) are flexible hinge. Coiled coils occupy residues 835–923 (EAEI…AKLE), 977–1116 (EMLS…AKAG), and 1209–1265 (VEAI…LQSV). Positions 1049–1074 (ADSGAEERARQRRDELHAQLSNNRSR) are disordered. Positions 1051–1065 (SGAEERARQRRDELH) are enriched in basic and acidic residues.

It belongs to the SMC family. MukB subfamily. In terms of assembly, homodimerization via its hinge domain. Binds to DNA via its C-terminal region. Interacts, and probably forms a ternary complex, with MukE and MukF via its C-terminal region. The complex formation is stimulated by calcium or magnesium. Interacts with tubulin-related protein FtsZ.

It is found in the cytoplasm. The protein localises to the nucleoid. Its function is as follows. Plays a central role in chromosome condensation, segregation and cell cycle progression. Functions as a homodimer, which is essential for chromosome partition. Involved in negative DNA supercoiling in vivo, and by this means organize and compact chromosomes. May achieve or facilitate chromosome segregation by condensation DNA from both sides of a centrally located replisome during cell division. This chain is Chromosome partition protein MukB, found in Salmonella typhimurium (strain LT2 / SGSC1412 / ATCC 700720).